The primary structure comprises 195 residues: GTP cyclohydrolase-2 (195 aa).

GTP is bound at residue 48-52 (RIHSE). Residues Cys-53, Cys-64, and Cys-66 each contribute to the Zn(2+) site. GTP-binding positions include Gln-69, 90–92 (EGR), and Thr-112. The active-site Proton acceptor is Asp-124. Catalysis depends on Arg-126, which acts as the Nucleophile. Positions 147 and 152 each coordinate GTP.

This sequence belongs to the GTP cyclohydrolase II family. Requires Zn(2+) as cofactor.

The enzyme catalyses GTP + 4 H2O = 2,5-diamino-6-hydroxy-4-(5-phosphoribosylamino)-pyrimidine + formate + 2 phosphate + 3 H(+). It participates in cofactor biosynthesis; riboflavin biosynthesis; 5-amino-6-(D-ribitylamino)uracil from GTP: step 1/4. Functionally, catalyzes the conversion of GTP to 2,5-diamino-6-ribosylamino-4(3H)-pyrimidinone 5'-phosphate (DARP), formate and pyrophosphate. The sequence is that of GTP cyclohydrolase-2 from Campylobacter fetus subsp. fetus (strain 82-40).